Consider the following 465-residue polypeptide: Protein Loquacious (465 aa).

Positions 1-337 (MDQENFHGSS…DSICGELEGE (337 aa)) are necessary for enhancing pre-miRNA processing by Dcr-1. Residues 1–379 (MDQENFHGSS…TLKNATGKKL (379 aa)) are not required for interaction with Dcr-1. The tract at residues 1–392 (MDQENFHGSS…QKTCLKNNKI (392 aa)) is important for homodimerization and interaction with Dcr-1. Positions 129-211 (NGLAMKTPVS…DKLIGAQLPE (83 aa)) are sufficient for binding RNA. Residues 129-322 (NGLAMKTPVS…WMRLQETPID (194 aa)) are necessary for promoting preferential binding of Dcr-2 to the less stably base paired ends of siRNAs. The 72-residue stretch at 135 to 206 (TPVSILQELL…ARALIDKLIG (72 aa)) folds into the DRBM 1 domain. Residues 209–249 (LPESPSSSAGPSVTGLTVAGSGGDGNANATGGGDASDKTVG) are enables simultaneous binding of both DRBM 1 and 2 domains to dsRNA. The disordered stretch occupies residues 210-246 (PESPSSSAGPSVTGLTVAGSGGDGNANATGGGDASDK). The segment covering 211–223 (ESPSSSAGPSVTG) has biased composition (polar residues). Positions 220 to 465 (SVTGLTVAGS…LEYLKIMTKK (246 aa)) are necessary and sufficient for enhancing processing of pre-miRNAs by Dcr-1. The segment covering 228-242 (GSGGDGNANATGGGD) has biased composition (gly residues). The interval 245–322 (DKTVGNPIGW…WMRLQETPID (78 aa)) is sufficient for binding RNA. The region spanning 250–318 (NPIGWLQEMC…AHRMWMRLQE (69 aa)) is the DRBM 2 domain. Residues 308 to 309 (AA) form a necessary for binding pre-miRNA region. Residues 338 to 359 (PRSSENYYGELKDISVPTLTTQ) are required for binding to Dcr-2 and to fully enhance Dcr-2 mediated cleavage of 3' overhanging termini (3'ovr) and blunt termini (BLT) dsRNAs. However, this region is dispensable for binding the dsRNA substrates. The segment at 340 to 465 (SSENYYGELK…LEYLKIMTKK (126 aa)) is necessary for interaction with Dcr-1. Residues 392–463 (IDYIKLLGEI…NALEYLKIMT (72 aa)) form a sufficent for binding to Dcr-1 region. In terms of domain architecture, DRBM 3 spans 393-461 (DYIKLLGEIA…AQNALEYLKI (69 aa)).

Homodimer. In terms of assembly, interacts with dicer enzyme Dcr-1. As to quaternary structure, component of the miRNA-directed RNA-induced loading complex (miRLC), composed of at least Dcr-1, AGO1 and loqs isoform PB (loqs-PB), which processes pre-miRNAs and loads the resulting miRNAs into the Argonaute 1 (AGO1)-containing RNA-induced silencing complex (miRISC) to target the selective destruction of homologous RNAs. Interacts (via DRBM 3 domain) with dicer enzyme Dcr-1 (via helicase domain). Different regions of the Dcr-1-loqs-PB heterodimer collaborate to recognize, bind and position the pre-miRNA for Dcr-1 mediated cleavage. In the absence of miRNA substrates, the heterodimer favors a closed, catalytically incompetent, conformation, whereas binding of authentic pre-miRNA substrates stabilizes the relatively rare open, catalytically competent, conformation of the heterodimer. During substrate recognition, the Dcr-1 PAZ domain and pre-miRNA interact with the DRBM 1 domain of loqs-PB, which likely contributes to substrate recognition and stabilization. At the miRNA binding stage, the Dcr-1 DRBM domain and the loqs-PB DRBM domains then bind the pre-miRNA in tandem to form a tight 'belt' around the pre-miRNA stem, the pre-miRNA loop is docked in the loop-binding region formed by DUF283, DRBM and part of the helicase domain of Dcr-1, and the loqs-PB DRBM 1 and the wing domain of Dcr-1 act together to bind the 5' and 3' pre-miRNA termini within the PAZ and platform domains of Dcr-1. These interactions between the proteins and their pre-miRNA substrate stabilize a distorted form of the pre-miRNA and position the scissile phosphodiester bonds of the pre-miRNA at the RNase III catalytic cleavage sites of Dcr-1. Following Dcr-1 mediated cleavage, the miRNA duplex remains bound to loqs-PB DRBM 1, which dissociates from the Dcr-1 RNase III 1 domain but remains in contact with the PAZ and wing domains suggesting that the heterodimer presents the mature miRNA to AGO2 for loading into the RNA-induced silencing complex (miRISC). Able to interact with dicer enzyme Dcr-1. However, the relevance of such an interaction is unclear in vivo and another report found that it did not interact with Dcr-1. In terms of assembly, monomer. Interacts (via C-terminus) with dicer enzyme Dcr-2 (via N-terminus); interaction is required for RNAi activity in producing siRNAs from a subset of endo- and exo-dsRNAs, and in the alternative siRLC, the interaction enhances the binding preference of the protein for the thermodynamically more stable ends of endogenous siRNAs. Interaction with Dcr-2 is RNA independent, however the isoform must bind both dsRNA and Dcr-2 to enhance Dcr-2 cleavage activity. Does not interact with Dcr-1. Strong expression in males and females. Expression in ovaries is relatively weak. In terms of tissue distribution, strong expression in females and relatively weak expression in males. Strong expression in ovaries.

It is found in the cytoplasm. It localises to the cytosol. Double-stranded RNA-binding protein which can function in gene silencing by acting with Dcr-1 to enhance its ATP-independent processing of a specific subset of precursor micro-RNAs (pre-miRNAs) to mature miRNAs. Some reports found it was able to enhance the efficiency of pre-miRNA processing by Dcr-1, and can shift the cleavage site of Dcr-1 altering the length of the mature miRNAs produced by Dcr-1 alone. However, in contrast to isoform PB, it is not necessary or sufficient for enhancing miRNA biogenesis, and is not required for development or female germline stem cell (GSC) maintenance. Another report also found that it decreases binding of Dcr-1 to the miRNA substrate let-7. Functionally, double-stranded RNA-binding protein which functions in gene silencing by acting with Dcr-1 to enhance its ATP-independent processing of a specific subset of precursor micro-RNAs (pre-miRNAs) to mature miRNAs. Function is essential for development and female germline stem cell (GSC) maintenance. Functions in miRNA-mediated gene silencing by enhancing the binding affinity and specific pre-miRNA processing activity of Dcr-1, and as part of the loqs-PB-Dcr-1 complex, is involved in substrate discrimination, correctly positioning the pre-miRNA in the Dcr-1 catalytic center for cleavage, and miRNA loading into the Argonaute 1 (Ago1)-containing RNA-induced silencing complex (miRISC). Increases the binding affinity of Dcr-1 to pre-miRNAs, thereby increasing dicing efficiency and broadening the range of substrates that can be processed by the dicer. It may also confer the substrate specificity of Dcr-1 towards pre-miRNAs, as in its absence Dcr-1 displays siRNA-generating activity towards long dsRNA substrates. It can also shift the cleavage site of Dcr-1 for a small number of pre-miRNAs, changing the length of the mature miRNAs produced by Dcr-1 alone. Increases the range of pre-miRNAs that can be processed by Dcr-1, by enhancing the dicing of suboptimal hairpin substrates including ones with mismatches at the dicing site. This function may also promote the generation of novel miRNA genes as it appears to have an important role in processing evolutionarily young miRNA genes, suggesting that it may also enhance dicing of substrates that have not acquired hairpin features required for efficient miRNA processing. As newly emerged miRNAs can have deleterious or beneficial effects on fitness, this function is likely part of a regulatory system that prevents excessive emergence of active miRNA genes and thus keeps them within an optimal range. Also forms a RISC loading complex (miRLC) with Dcr-1 to mediate Ago1-loading of mature miRNAs into the RNA-induced silencing complex (miRISC). In female ovaries, required for Dcr-1 to generate the twenty-three nucleotide isomiR variant of miR-307a which is able to repress its targets Gk2 and tara. Its function is as follows. Double-stranded RNA-binding protein which has an essential role in gene silencing (RNAi) by acting with Dcr-2 to enhance its ATP-dependent processing of a subset of endogenous (endo) and exogenous (exo) dsRNAs into short interfering RNAs (siRNAs). Functions in RNAi by increasing the initial binding affinity of Dcr-2 to certain dsRNA substrates, and in the absence of r2d2, may also function in siRNA loading into the Argonaute 2 (AGO2)-containing RNA-induced silencing complex (siRISC) and guide strand selection for target silencing by the siRISC. Promotes Dcr-2 cleavage of a subset of dsRNAs, including endo-dsRNAs derived from convergent transcription, inverted repeats and transposons. Also enables Dcr-2 to produce hairpin-derived endo-siRNAs in the presence of cellular inhibitory inorganic phosphate, likely by increasing the binding affinity of the enzyme to the hairpin dsRNAs allowing the dsRNA to displace phosphate bound to Dcr-2. According to many reports, the cleavage reaction mode of Dcr-2 changes according to the termini of the dsRNA substrate, with the enzyme displaying a preference for processing blunt termini (BLT), likely non-self dsRNAs, over dsRNAs with 2 nucleotides 3' overhanging (3'ovr) termini, which are typically the structure of endo-dsRNAs. According to many reports, interaction with Loqs-PD modifies the molecular recognition mechanisms of Dcr-2 towards sub-optimal 3'ovr dsRNA substrates and thus enables the dicer to cleave endo-dsRNA templates with diverse termini. However, according to another report, the mode of cleavage reaction is not affected by the presence or absence of loqs-PD. In the absence of r2d2, may also form an alternative RISC loading complex (siRLC) with Dcr-2 to mediate AGO2-loading of endo- and exo-siRNAs into the RNA-induced silencing complex (siRISC). Many reports suggest that loqs-PD and r2d2 function independently with dcr-2 in distinct siRNA pathways, and may even compete for binding to the enzyme. Loaded siRNAs serve as a guide to direct the siRISC to complementary RNAs to degrade them or prevent their translation. The siRLC plays an important role in the ATP-dependent asymmetry sensing of the duplex, and is therefore also responsible for the selection of the strand that ultimately acts as the guide siRNA for the siRISC. Thermodynamically asymmetric endo-siRNAs can be pre-oriented in the siRLC by the Loqs-PD and DCr-2 complex, which preferentially binds to the most thermodynamically stable strand prior to loading into the siRISC. Appears to be involved in promoting double-strand breaks (DSBs) following exposure to a low-dose/dose-rate (LDR) of ionizing radiation. The polypeptide is Protein Loquacious (Drosophila melanogaster (Fruit fly)).